We begin with the raw amino-acid sequence, 20 residues long: Large ribosomal subunit protein bL33 (20 aa).

This sequence belongs to the bacterial ribosomal protein bL33 family.

The chain is Large ribosomal subunit protein bL33 (rpmG) from Brevundimonas vesicularis (Pseudomonas vesicularis).